Consider the following 231-residue polypeptide: Heptaprenylglyceryl phosphate synthase (231 aa).

Lys-12 lines the sn-glycerol 1-phosphate pocket. Mg(2+) is bound by residues Asp-14 and Thr-40. Sn-glycerol 1-phosphate contacts are provided by residues 159–164 (YMEYSG), Gly-189, and 209–210 (GN).

This sequence belongs to the GGGP/HepGP synthase family. Group I subfamily. In terms of assembly, homodimer. Mg(2+) serves as cofactor.

The catalysed reaction is sn-glycerol 1-phosphate + all-trans-heptaprenyl diphosphate = 3-heptaprenyl-sn-glycero-1-phosphate + diphosphate. Its pathway is membrane lipid metabolism; glycerophospholipid metabolism. Functionally, prenyltransferase that catalyzes in vivo the transfer of the heptaprenyl moiety of heptaprenyl pyrophosphate (HepPP; 35 carbon atoms) to the C3 hydroxyl of sn-glycerol-1-phosphate (G1P), producing heptaprenylglyceryl phosphate (HepGP). This reaction is an ether-bond-formation step in the biosynthesis of archaea-type G1P-based membrane lipids found in Bacillales. This is Heptaprenylglyceryl phosphate synthase from Anoxybacillus flavithermus (strain DSM 21510 / WK1).